Reading from the N-terminus, the 330-residue chain is PDZ and LIM domain protein 4 (330 aa).

Residues 8–84 enclose the PDZ domain; sequence RGPSPWGFRL…QLLLSVSRAE (77 aa). Disordered regions lie at residues 106–152 and 163–182; these read EPEP…SSSA and LHIS…RNRN. Positions 139–152 are enriched in polar residues; sequence QHPQPSRPHASSSA. The LIM zinc-binding domain occupies 255–305; it reads CTRCGNGIVGTIVKARDKLYHPECFMCDDCGLNLKQRGYFFIEEQLYCETH.

In terms of assembly, interacts (via LIM domain) with PTPN13. Interacts (via PDZ domain) with ACTN1.

The protein localises to the cytoplasm. The protein resides in the cytoskeleton. Its subcellular location is the cell projection. It is found in the dendritic spine. It localises to the early endosome membrane. The protein localises to the recycling endosome membrane. The protein resides in the nucleus. Its subcellular location is the perinuclear region. It is found in the lamellipodium. It localises to the synapse. The protein localises to the synaptosome. Functionally, suppresses SRC activation by recognizing and binding to active SRC and facilitating PTPN13-mediated dephosphorylation of SRC 'Tyr-419' leading to its inactivation. Inactivated SRC dissociates from this protein allowing the initiation of a new SRC inactivation cycle. Involved in reorganization of the actin cytoskeleton. In nonmuscle cells, binds to ACTN1 (alpha-actinin-1), increases the affinity of ACTN1 to F-actin (filamentous actin), and promotes formation of actin stress fibers. Involved in regulation of the synaptic AMPA receptor transport in dendritic spines of hippocampal pyramidal neurons directing the receptors toward an insertion at the postsynaptic membrane. Links endosomal surface-internalized GRIA1-containing AMPA receptors to the alpha-actinin/actin cytoskeleton. Increases AMPA receptor-mediated excitatory postsynaptic currents in neurons. The sequence is that of PDZ and LIM domain protein 4 (PDLIM4) from Gallus gallus (Chicken).